The following is a 397-amino-acid chain: LIM/homeobox protein Lhx3 (397 aa).

2 consecutive LIM zinc-binding domains span residues 31-81 (CAGC…CKDD) and 90-144 (CAAC…CKAD). A Phosphothreonine modification is found at Thr-63. Ser-71 is modified (phosphoserine). The homeobox DNA-binding region spans 157 to 216 (AKRPRTTITAKQLETLKSAYNTSPKPARHVREQLSSETGLDMRVVQVWFQNRRAKEKRLK). The disordered stretch occupies residues 212-397 (EKRLKKDAGR…WLDEVDHAQF (186 aa)). Tyr-227 is modified (phosphotyrosine). Ser-234 and Ser-238 each carry phosphoserine. Positions 316-331 (GVPPSPAAPQSLPGPQ) are enriched in pro residues.

Interacts with POU1F1. At neuronal promoters, interacts with LDB1, in motor neurons LDB1 is displaced by ISL1 and a ternary complex is formed in which ISL1 contacts both LHX3 and LDB1; allosteric structural changes in the DNA binding domain of LHX3, induced by the ISL1-LHX3 interaction, may explain differences in sequence specificity of the different complexes. Interacts with LDB2. May interact with CITED2/MRG1.

It localises to the nucleus. In terms of biological role, transcription factor. Recognizes and binds to the consensus sequence motif 5'-AATTAATTA-3' in the regulatory elements of target genes, such as glycoprotein hormones alpha chain CGA and visual system homeobox CHX10, positively modulating transcription; transcription can be co-activated by LDB2. Synergistically enhances transcription from the prolactin promoter in cooperation with POU1F1/Pit-1. Required for the establishment of the specialized cells of the pituitary gland and the nervous system. Involved in the development of interneurons and motor neurons in cooperation with LDB1 and ISL1. The polypeptide is LIM/homeobox protein Lhx3 (LHX3) (Homo sapiens (Human)).